The following is a 358-amino-acid chain: Chorismate synthase (358 aa).

Arginine 47 is a binding site for NADP(+). FMN is bound by residues 124–126, 240–241, glycine 284, 299–303, and arginine 325; these read RSS, NA, and KPIAT.

It belongs to the chorismate synthase family. As to quaternary structure, homotetramer. Requires FMNH2 as cofactor.

The catalysed reaction is 5-O-(1-carboxyvinyl)-3-phosphoshikimate = chorismate + phosphate. It participates in metabolic intermediate biosynthesis; chorismate biosynthesis; chorismate from D-erythrose 4-phosphate and phosphoenolpyruvate: step 7/7. Catalyzes the anti-1,4-elimination of the C-3 phosphate and the C-6 proR hydrogen from 5-enolpyruvylshikimate-3-phosphate (EPSP) to yield chorismate, which is the branch point compound that serves as the starting substrate for the three terminal pathways of aromatic amino acid biosynthesis. This reaction introduces a second double bond into the aromatic ring system. The sequence is that of Chorismate synthase from Bacteroides thetaiotaomicron (strain ATCC 29148 / DSM 2079 / JCM 5827 / CCUG 10774 / NCTC 10582 / VPI-5482 / E50).